The primary structure comprises 238 residues: ATP synthase subunit a, chloroplastic (238 aa).

5 helical membrane-spanning segments follow: residues 27–47 (GQVLITSWVVLGILAVLSFLG), 86–106 (VPFLGTIFLFIFVSNWSGALL), 125–145 (INTTVALALLTSISYFYAGIS), 190–210 (LVVGVLVALVPLIIPIPIMLL), and 211–231 (GVFTSAIQALVFATLAGAYIN).

This sequence belongs to the ATPase A chain family. In terms of assembly, F-type ATPases have 2 components, F(1) - the catalytic core - and F(0) - the membrane proton channel. F(1) has five subunits: alpha(3), beta(3), gamma(1), delta(1), epsilon(1). F(0) has four main subunits: a(1), b(1), b'(1) and c(10-14). The alpha and beta chains form an alternating ring which encloses part of the gamma chain. F(1) is attached to F(0) by a central stalk formed by the gamma and epsilon chains, while a peripheral stalk is formed by the delta, b and b' chains.

It is found in the plastid. It localises to the chloroplast thylakoid membrane. Functionally, f(1)F(0) ATP synthase produces ATP from ADP in the presence of a proton or sodium gradient. F-type ATPases consist of two structural domains, F(1) containing the extramembraneous catalytic core and F(0) containing the membrane proton channel, linked together by a central stalk and a peripheral stalk. During catalysis, ATP synthesis in the catalytic domain of F(1) is coupled via a rotary mechanism of the central stalk subunits to proton translocation. The protein is ATP synthase subunit a, chloroplastic of Chlamydomonas reinhardtii (Chlamydomonas smithii).